The chain runs to 309 residues: Cytidine deaminase (309 aa).

2 CMP/dCMP-type deaminase domains span residues 48 to 168 and 200 to 309; these read DEDA…FGPR and DDND…SLSL. Residue 89–91 participates in substrate binding; sequence NME. Histidine 102 is a binding site for Zn(2+). The active-site Proton donor is glutamate 104. Positions 129 and 132 each coordinate Zn(2+).

The protein belongs to the cytidine and deoxycytidylate deaminase family. As to quaternary structure, homodimer. The cofactor is Zn(2+).

It catalyses the reaction cytidine + H2O + H(+) = uridine + NH4(+). The catalysed reaction is 2'-deoxycytidine + H2O + H(+) = 2'-deoxyuridine + NH4(+). Functionally, this enzyme scavenges exogenous and endogenous cytidine and 2'-deoxycytidine for UMP synthesis. The protein is Cytidine deaminase of Sodalis glossinidius (strain morsitans).